Consider the following 152-residue polypeptide: 3-hydroxyacyl-[acyl-carrier-protein] dehydratase FabZ (152 aa).

Residue His-58 is part of the active site.

Belongs to the thioester dehydratase family. FabZ subfamily.

It localises to the cytoplasm. It catalyses the reaction a (3R)-hydroxyacyl-[ACP] = a (2E)-enoyl-[ACP] + H2O. Functionally, involved in unsaturated fatty acids biosynthesis. Catalyzes the dehydration of short chain beta-hydroxyacyl-ACPs and long chain saturated and unsaturated beta-hydroxyacyl-ACPs. This chain is 3-hydroxyacyl-[acyl-carrier-protein] dehydratase FabZ, found in Prochlorococcus marinus (strain MIT 9215).